Here is a 104-residue protein sequence, read N- to C-terminus: Large ribosomal subunit protein uL24 (104 aa).

The protein belongs to the universal ribosomal protein uL24 family. As to quaternary structure, part of the 50S ribosomal subunit.

Its function is as follows. One of two assembly initiator proteins, it binds directly to the 5'-end of the 23S rRNA, where it nucleates assembly of the 50S subunit. In terms of biological role, one of the proteins that surrounds the polypeptide exit tunnel on the outside of the subunit. This Shewanella woodyi (strain ATCC 51908 / MS32) protein is Large ribosomal subunit protein uL24.